The following is a 612-amino-acid chain: Probable translation initiation factor IF-2 (612 aa).

Positions 11-229 constitute a tr-type G domain; sequence LRQPIVVVLG…VLAGLTQRYL (219 aa). Residues 20 to 27 are G1; it reads GHVDHGKT. GTP is bound at residue 20-27; that stretch reads GHVDHGKT. Residues 45–49 are G2; sequence LITQH. Positions 84-87 are G3; sequence DTPG. Residues 84 to 88 and 138 to 141 contribute to the GTP site; these read DTPGH and NKID. The tract at residues 138-141 is G4; sequence NKID. The G5 stretch occupies residues 207–209; the sequence is SAK.

This sequence belongs to the TRAFAC class translation factor GTPase superfamily. Classic translation factor GTPase family. IF-2 subfamily.

Its function is as follows. Function in general translation initiation by promoting the binding of the formylmethionine-tRNA to ribosomes. Seems to function along with eIF-2. This chain is Probable translation initiation factor IF-2, found in Hyperthermus butylicus (strain DSM 5456 / JCM 9403 / PLM1-5).